A 231-amino-acid chain; its full sequence is NADH-ubiquinone oxidoreductase chain 4 (231 aa).

6 consecutive transmembrane segments (helical) span residues 1 to 21 (PIAG…YGII), 34 to 54 (MFLP…LTCL), 63 to 85 (IAYS…TPWG), 89 to 111 (AMTL…NTTY), 128 to 148 (ILPM…AIPP), and 156 to 176 (LLIM…LGLS).

This sequence belongs to the complex I subunit 4 family.

The protein resides in the mitochondrion membrane. It catalyses the reaction a ubiquinone + NADH + 5 H(+)(in) = a ubiquinol + NAD(+) + 4 H(+)(out). Its function is as follows. Core subunit of the mitochondrial membrane respiratory chain NADH dehydrogenase (Complex I) that is believed to belong to the minimal assembly required for catalysis. Complex I functions in the transfer of electrons from NADH to the respiratory chain. The immediate electron acceptor for the enzyme is believed to be ubiquinone. This Gloydius intermedius (Central Asian pit viper) protein is NADH-ubiquinone oxidoreductase chain 4 (MT-ND4).